Consider the following 87-residue polypeptide: Acetolactate synthase isozyme 2 small subunit (87 aa).

One can recognise an ACT domain in the interval 5–78 (QVNVSARFNP…DVAHVAICQS (74 aa)).

In terms of assembly, tetramer of two large and two small chains. The cofactor is Mg(2+). Thiamine diphosphate serves as cofactor.

The catalysed reaction is 2 pyruvate + H(+) = (2S)-2-acetolactate + CO2. It participates in amino-acid biosynthesis; L-isoleucine biosynthesis; L-isoleucine from 2-oxobutanoate: step 1/4. It functions in the pathway amino-acid biosynthesis; L-valine biosynthesis; L-valine from pyruvate: step 1/4. This is Acetolactate synthase isozyme 2 small subunit (ilvM) from Escherichia coli O6:H1 (strain CFT073 / ATCC 700928 / UPEC).